We begin with the raw amino-acid sequence, 134 residues long: Glycine cleavage system H protein (134 aa).

Residues 24–106 (TVRVGITDYA…YGAGWLLDIQ (83 aa)) form the Lipoyl-binding domain. At K65 the chain carries N6-lipoyllysine.

The protein belongs to the GcvH family. As to quaternary structure, the glycine cleavage system is composed of four proteins: P, T, L and H. Requires (R)-lipoate as cofactor.

The glycine cleavage system catalyzes the degradation of glycine. The H protein shuttles the methylamine group of glycine from the P protein to the T protein. The chain is Glycine cleavage system H protein from Mycobacterium tuberculosis (strain ATCC 25177 / H37Ra).